Here is a 122-residue protein sequence, read N- to C-terminus: Large ribosomal subunit protein uL14c (122 aa).

The protein belongs to the universal ribosomal protein uL14 family. In terms of assembly, part of the 50S ribosomal subunit.

The protein localises to the plastid. The protein resides in the chloroplast. Binds to 23S rRNA. This is Large ribosomal subunit protein uL14c from Lepidium virginicum (Virginia pepperweed).